Here is a 20-residue protein sequence, read N- to C-terminus: Venom protease (20 aa).

It belongs to the peptidase S1 family. Post-translationally, contains 3 disulfide bonds. N-glycosylated. As to expression, expressed by the venom duct.

Its subcellular location is the secreted. This Bombus terrestris (Buff-tailed bumblebee) protein is Venom protease.